The sequence spans 208 residues: UPF0637 protein BcerKBAB4_3786 (208 aa).

It belongs to the UPF0637 family.

This is UPF0637 protein BcerKBAB4_3786 from Bacillus mycoides (strain KBAB4) (Bacillus weihenstephanensis).